Here is a 390-residue protein sequence, read N- to C-terminus: Dihydroorotase (390 aa).

Positions 54 and 56 each coordinate Zn(2+). Substrate contacts are provided by residues 56–58 and Asn-88; that span reads HIR. Zn(2+)-binding residues include Lys-136, His-160, His-197, and Asp-259. N6-carboxylysine is present on Lys-136. Residue Asp-259 is part of the active site. Residues His-263 and 277-278 each bind substrate; that span reads PG.

It belongs to the metallo-dependent hydrolases superfamily. DHOase family. Class I DHOase subfamily. The cofactor is Zn(2+).

It carries out the reaction (S)-dihydroorotate + H2O = N-carbamoyl-L-aspartate + H(+). It functions in the pathway pyrimidine metabolism; UMP biosynthesis via de novo pathway; (S)-dihydroorotate from bicarbonate: step 3/3. Functionally, catalyzes the reversible cyclization of carbamoyl aspartate to dihydroorotate. The protein is Dihydroorotase of Saccharolobus solfataricus (strain ATCC 35092 / DSM 1617 / JCM 11322 / P2) (Sulfolobus solfataricus).